Consider the following 198-residue polypeptide: MNHIVWHQHAITHSERAAQKGHRGAILWFTGLSGAGKSTLAGALEAELFRRGLHSYLLDGDNVRHGLCKDLGFSLEDRRENIRRVGEVAKLMLDAGLLVLSAFVSPQRAERDLVRALVGEGEFIEVHVATPLTVCESRDPKGLYQKARAGEIKDFTGISSPYEAPVSAELVIDTSEGDLDSQVAKLVDYLISGGYIPA.

31–38 (GLSGAGKS) serves as a coordination point for ATP. S105 (phosphoserine intermediate) is an active-site residue.

Belongs to the APS kinase family.

The enzyme catalyses adenosine 5'-phosphosulfate + ATP = 3'-phosphoadenylyl sulfate + ADP + H(+). It functions in the pathway sulfur metabolism; hydrogen sulfide biosynthesis; sulfite from sulfate: step 2/3. Functionally, catalyzes the synthesis of activated sulfate. This chain is Adenylyl-sulfate kinase, found in Shewanella amazonensis (strain ATCC BAA-1098 / SB2B).